The primary structure comprises 526 residues: Tyrosine-protein kinase transforming protein Src (526 aa).

The disordered stretch occupies residues Met1–Glu57. A lipid anchor (N-myristoyl glycine; by host) is attached at Gly2. Positions Lys7–His25 are enriched in basic and acidic residues. The SH3 domain occupies Gly81–Ser142. The region spanning Trp148–Cys245 is the SH2 domain. Residues Leu267–Leu517 enclose the Protein kinase domain. ATP is bound by residues Leu273–Val281 and Lys295. Catalysis depends on Asp386, which acts as the Proton acceptor. The residue at position 416 (Tyr416) is a Phosphotyrosine; by autocatalysis.

Belongs to the protein kinase superfamily. Tyr protein kinase family. SRC subfamily. Post-translationally, the phosphorylated form is termed pp60v-src.

It catalyses the reaction L-tyrosyl-[protein] + ATP = O-phospho-L-tyrosyl-[protein] + ADP + H(+). Functionally, this phosphoprotein, required for both the initiation and the maintenance of neoplastic transformation, is a protein kinase that catalyzes the phosphorylation of tyrosine residues in vitro. The polypeptide is Tyrosine-protein kinase transforming protein Src (V-SRC) (Galliformes).